The following is a 300-amino-acid chain: Geranylgeranyl pyrophosphate synthase (300 aa).

At M1 the chain carries N-acetylmethionine. Isopentenyl diphosphate is bound by residues K25, R28, and H57. Mg(2+)-binding residues include D64 and D68. Position 73 (R73) interacts with dimethylallyl diphosphate. R74 provides a ligand contact to isopentenyl diphosphate. Positions 151, 152, 185, 202, and 212 each coordinate dimethylallyl diphosphate.

Belongs to the FPP/GGPP synthase family. Homohexamer; trimer of homodimers. It depends on Mg(2+) as a cofactor. Abundantly expressed in testis. Found in other tissues to a lower extent. Expressed in dermal fibroblast and skeletal muscle.

It is found in the cytoplasm. Its subcellular location is the perinuclear region. The protein localises to the myofibril. The protein resides in the sarcomere. It localises to the z line. It catalyses the reaction isopentenyl diphosphate + dimethylallyl diphosphate = (2E)-geranyl diphosphate + diphosphate. The enzyme catalyses isopentenyl diphosphate + (2E)-geranyl diphosphate = (2E,6E)-farnesyl diphosphate + diphosphate. The catalysed reaction is isopentenyl diphosphate + (2E,6E)-farnesyl diphosphate = (2E,6E,10E)-geranylgeranyl diphosphate + diphosphate. It functions in the pathway isoprenoid biosynthesis; farnesyl diphosphate biosynthesis; farnesyl diphosphate from geranyl diphosphate and isopentenyl diphosphate: step 1/1. Its pathway is isoprenoid biosynthesis; geranyl diphosphate biosynthesis; geranyl diphosphate from dimethylallyl diphosphate and isopentenyl diphosphate: step 1/1. It participates in isoprenoid biosynthesis; geranylgeranyl diphosphate biosynthesis; geranylgeranyl diphosphate from farnesyl diphosphate and isopentenyl diphosphate: step 1/1. Subject to product inhibition by geranylgeranyl diphosphate. Functionally, catalyzes the trans-addition of the three molecules of IPP onto DMAPP to form geranylgeranyl pyrophosphate, an important precursor of carotenoids and geranylated proteins. This is Geranylgeranyl pyrophosphate synthase (GGPS1) from Homo sapiens (Human).